A 580-amino-acid polypeptide reads, in one-letter code: CTP synthase (580 aa).

The Glutamine amidotransferase type-1 domain occupies 304–559 (NIILVGKYVS…VAASSGCLDE (256 aa)). Active-site for GATase activity residues include cysteine 403, histidine 532, and glutamate 534.

The protein belongs to the CTP synthase family.

It carries out the reaction UTP + L-glutamine + ATP + H2O = CTP + L-glutamate + ADP + phosphate + 2 H(+). It participates in pyrimidine metabolism; CTP biosynthesis via de novo pathway; CTP from UDP: step 2/2. In terms of biological role, catalyzes the ATP-dependent amination of UTP to CTP with either L-glutamine or ammonia as the source of nitrogen. In Gibberella zeae (strain ATCC MYA-4620 / CBS 123657 / FGSC 9075 / NRRL 31084 / PH-1) (Wheat head blight fungus), this protein is CTP synthase (URA7).